The primary structure comprises 623 residues: ATPase expression protein 3 (623 aa).

PPR repeat units lie at residues 217 to 251 (SVQCYNDILYFYSKKYDFATCRELFAQMKVEGCKP), 252 to 292 (NTTT…NGIF), 362 to 396 (NLKFVNLLISDLVLDHNVERAWSVLRYFELKQLKF), 405 to 439 (NSETMNTFLRYFAEQGRIDLCFLTYNYFVKDLVGP), and 445 to 479 (NVNTFDMLMKSLVKNGYTETLPTVFEVICALSERY).

Its subcellular location is the mitochondrion inner membrane. Required for respiration. This Candida glabrata (strain ATCC 2001 / BCRC 20586 / JCM 3761 / NBRC 0622 / NRRL Y-65 / CBS 138) (Yeast) protein is ATPase expression protein 3 (AEP3).